Reading from the N-terminus, the 287-residue chain is MASLRDIKSRITSTKKTSQITKAMQMVSAAKLNRAETNAKSFAPYMDKIQEVVFNVGKGAKNAKHPMLVSREVKKTAYLVITSDRGLAGAFNSSVLRNAYRTIQERHQSKDEYTVIAIGRVGRDFFKKREMPILSELVGLGDEVTFAQIKDLTRQTVQMFIDGAFDELHLVYNHFVSAISQEVTEKKVLPLTDFGTSGGKRTASYEFEPDEEEVLEVLLPQYAESLIYGALLDSKASEHAARMTAMKNATDNAKELIDSLSLSYNRARQAAITQEITEIVGGAAALE.

This sequence belongs to the ATPase gamma chain family. In terms of assembly, F-type ATPases have 2 components, CF(1) - the catalytic core - and CF(0) - the membrane proton channel. CF(1) has five subunits: alpha(3), beta(3), gamma(1), delta(1), epsilon(1). CF(0) has three main subunits: a, b and c.

It is found in the cell membrane. Its function is as follows. Produces ATP from ADP in the presence of a proton gradient across the membrane. The gamma chain is believed to be important in regulating ATPase activity and the flow of protons through the CF(0) complex. This is ATP synthase gamma chain from Bacillus velezensis (strain DSM 23117 / BGSC 10A6 / LMG 26770 / FZB42) (Bacillus amyloliquefaciens subsp. plantarum).